The chain runs to 485 residues: ATP-dependent 6-phosphofructokinase (485 aa).

Residues G105, 171 to 172, and 196 to 199 contribute to the ATP site; these read RG and GDGT. D197 contributes to the Mg(2+) binding site. Substrate contacts are provided by residues 225–227, 270–272, E323, and 378–381; these read TID, MGR, and YMIR. D227 acts as the Proton acceptor in catalysis. A Peroxisomal targeting signal motif is present at residues 483 to 485; sequence SKL.

This sequence belongs to the phosphofructokinase type A (PFKA) family. PPi-dependent PFK group II subfamily. Atypical ATP-dependent clade 'X' sub-subfamily. Homotetramer. The cofactor is Mg(2+).

The protein resides in the glycosome. The enzyme catalyses beta-D-fructose 6-phosphate + ATP = beta-D-fructose 1,6-bisphosphate + ADP + H(+). Its pathway is carbohydrate degradation; glycolysis; D-glyceraldehyde 3-phosphate and glycerone phosphate from D-glucose: step 3/4. With respect to regulation, allosterically activated by AMP. Its function is as follows. Catalyzes the phosphorylation of D-fructose 6-phosphate to fructose 1,6-bisphosphate by ATP, the first committing step of glycolysis. The sequence is that of ATP-dependent 6-phosphofructokinase from Trypanosoma cruzi (strain CL Brener).